A 130-amino-acid chain; its full sequence is Small ribosomal subunit protein uS8 (130 aa).

Belongs to the universal ribosomal protein uS8 family. As to quaternary structure, part of the 30S ribosomal subunit.

Its function is as follows. One of the primary rRNA binding proteins, it binds directly to 16S rRNA central domain where it helps coordinate assembly of the platform of the 30S subunit. In Methanococcus voltae, this protein is Small ribosomal subunit protein uS8.